The primary structure comprises 541 residues: Chaperonin GroEL 2 (541 aa).

ATP-binding positions include 29-32 (TLGP), 86-90 (DGTTT), G413, 476-478 (NAA), and D492.

This sequence belongs to the chaperonin (HSP60) family. In terms of assembly, forms a cylinder of 14 subunits composed of two heptameric rings stacked back-to-back. Interacts with the co-chaperonin GroES.

The protein localises to the secreted. It is found in the capsule. Its subcellular location is the cell surface. It localises to the cell wall. The catalysed reaction is ATP + H2O + a folded polypeptide = ADP + phosphate + an unfolded polypeptide.. Together with its co-chaperonin GroES, plays an essential role in assisting protein folding. The GroEL-GroES system forms a nano-cage that allows encapsulation of the non-native substrate proteins and provides a physical environment optimized to promote and accelerate protein folding. This is Chaperonin GroEL 2 from Mycobacterium avium (strain 104).